A 2094-amino-acid polypeptide reads, in one-letter code: Non-reducing polyketide synthase ustP (2094 aa).

An N-terminal acylcarrier protein transacylase (SAT) domain region spans residues 9–243 (VFGDLSVPYH…GKIQVGGLFH (235 aa)). The segment at 357 to 377 (NTAGVDSSSRGSGHADAEKQP) is disordered. The 435-residue stretch at 379 to 813 (RSKIAIIGFS…GGNSSVLVED (435 aa)) folds into the Ketosynthase family 3 (KS3) domain. Catalysis depends on for beta-ketoacyl synthase activity residues cysteine 551, histidine 686, and histidine 727. Residues 914-1227 (FSFTGQGSQY…EDDCKIFTPA (314 aa)) form a malonyl-CoA:ACP transacylase (MAT) domain region. Residue serine 1004 is the For acyl/malonyl transferase activity of the active site. The segment at 1305–1629 (TTSVQYITAE…QRKVLDLVLP (325 aa)) is product template (PT) domain. Residues 1308–1445 (VQYITAESYG…CSGFFTDKSR (138 aa)) are N-terminal hotdog fold. Residues 1308–1625 (VQYITAESYG…FAAVQRKVLD (318 aa)) form the PKS/mFAS DH domain. Histidine 1341 acts as the Proton acceptor; for dehydratase activity in catalysis. Residues 1473–1625 (GSVHMIKTGM…FAAVQRKVLD (153 aa)) are C-terminal hotdog fold. Aspartate 1536 functions as the Proton donor; for dehydratase activity in the catalytic mechanism. A compositionally biased stretch (low complexity) spans 1644 to 1671 (AAAAPSQRQQQQQQQQQQQPAQPVAASQ). The tract at residues 1644–1689 (AAAAPSQRQQQQQQQQQQQPAQPVAASQESGMDDMPPTLVPSEKKD) is disordered. In terms of domain architecture, Carrier spans 1689–1763 (DVPSEKLKVI…ELVRHILGSS (75 aa)). Serine 1723 carries the O-(pantetheine 4'-phosphoryl)serine modification. The span at 1762–1778 (SSTPSSDSGPATPSITP) shows a compositional bias: polar residues. The interval 1762–1782 (SSTPSSDSGPATPSITPLQEP) is disordered. Residues 1844–2069 (KVWLFPDGSG…GVVEGAHHFS (226 aa)) form a claisen cyclase domain region. Serine 1916 (for Claisen cyclase activity) is an active-site residue.

The enzyme catalyses 6 malonyl-CoA + acetyl-CoA + 6 H(+) = naphtopyrone YWA1 + 6 CO2 + 7 CoA + H2O. It functions in the pathway secondary metabolite biosynthesis. In terms of biological role, non-reducing polyketide synthase; part of the gene cluster that mediates the biosynthesis of ustilaginoidins, dimeric gamma-naphthopyrones isolated from different fungal species. The first step in the biosynthesis of ustilaginoidins is the production of gamma-naphthopyrone precursor YWA1 by the non-reducing polyketide synthase ustP, via condensation of one acetyl-CoA starter unit with 6 malonyl-CoA units. YWA1 is then probably substrate of the ustZ to yield norrubrofusarin via a dehydration reaction. A key enzyme in the biosynthetic pathway is the laccase ustL, which catalyzes the oxidative dimerization of norrubrofusarin to ustilaginoidin A. It can produce the M- and P-atropisomers in varying amounts, depending on the reaction conditions. For the biosynthesis of 3-methylustilaginoid in derivatives such as chaetochromin A, a methylated derivative of YWA1 is required. The C-methylation is considered to be catalyzed by ustM, the phosphopantetheine attachment site of which indicates that it acts on the growing polyketide chain before release of the product. For the biosynthesis of chaetochromin A, it is assumed that saturation of the D2 double bond takes place before dimerization, and is probably catalyzed by an external reductase because no candidate gene was identified within the cluster. This chain is Non-reducing polyketide synthase ustP, found in Ustilaginoidea virens (Rice false smut fungus).